Consider the following 143-residue polypeptide: Nucleoside diphosphate kinase (143 aa).

6 residues coordinate ATP: Lys11, Phe59, Arg87, Thr93, Arg104, and Asn114. Residue His117 is the Pros-phosphohistidine intermediate of the active site.

Belongs to the NDK family. In terms of assembly, homotetramer. Requires Mg(2+) as cofactor.

It is found in the cytoplasm. It carries out the reaction a 2'-deoxyribonucleoside 5'-diphosphate + ATP = a 2'-deoxyribonucleoside 5'-triphosphate + ADP. The catalysed reaction is a ribonucleoside 5'-diphosphate + ATP = a ribonucleoside 5'-triphosphate + ADP. Major role in the synthesis of nucleoside triphosphates other than ATP. The ATP gamma phosphate is transferred to the NDP beta phosphate via a ping-pong mechanism, using a phosphorylated active-site intermediate. In Edwardsiella ictaluri (strain 93-146), this protein is Nucleoside diphosphate kinase.